The chain runs to 599 residues: Elongation factor 4 (599 aa).

The tr-type G domain occupies 2-184 (KNIRNFSIIA…RLVRDIPPPE (183 aa)). Residues 14–19 (DHGKST) and 131–134 (NKID) contribute to the GTP site.

The protein belongs to the TRAFAC class translation factor GTPase superfamily. Classic translation factor GTPase family. LepA subfamily.

The protein localises to the cell inner membrane. The catalysed reaction is GTP + H2O = GDP + phosphate + H(+). Required for accurate and efficient protein synthesis under certain stress conditions. May act as a fidelity factor of the translation reaction, by catalyzing a one-codon backward translocation of tRNAs on improperly translocated ribosomes. Back-translocation proceeds from a post-translocation (POST) complex to a pre-translocation (PRE) complex, thus giving elongation factor G a second chance to translocate the tRNAs correctly. Binds to ribosomes in a GTP-dependent manner. The polypeptide is Elongation factor 4 (Shigella sonnei (strain Ss046)).